The following is a 68-amino-acid chain: MREGIHPDYYQAKVVCNCGNEFVTGSTKEEIHVEICSKCHPFYTGQQKASSTRGRIDKFNKKYGVSNN.

Positions 16, 18, 36, and 39 each coordinate Zn(2+).

The protein belongs to the bacterial ribosomal protein bL31 family. Type A subfamily. Part of the 50S ribosomal subunit. It depends on Zn(2+) as a cofactor.

Its function is as follows. Binds the 23S rRNA. This Lachnospira eligens (strain ATCC 27750 / DSM 3376 / VPI C15-48 / C15-B4) (Eubacterium eligens) protein is Large ribosomal subunit protein bL31.